The primary structure comprises 197 residues: Imidazoleglycerol-phosphate dehydratase (197 aa).

This sequence belongs to the imidazoleglycerol-phosphate dehydratase family.

It is found in the cytoplasm. The enzyme catalyses D-erythro-1-(imidazol-4-yl)glycerol 3-phosphate = 3-(imidazol-4-yl)-2-oxopropyl phosphate + H2O. It functions in the pathway amino-acid biosynthesis; L-histidine biosynthesis; L-histidine from 5-phospho-alpha-D-ribose 1-diphosphate: step 6/9. The polypeptide is Imidazoleglycerol-phosphate dehydratase (Methanocaldococcus jannaschii (strain ATCC 43067 / DSM 2661 / JAL-1 / JCM 10045 / NBRC 100440) (Methanococcus jannaschii)).